We begin with the raw amino-acid sequence, 428 residues long: Dihydroorotase (428 aa).

Positions 60 and 62 each coordinate Zn(2+). Substrate-binding positions include 62–64 and N94; that span reads HLR. Positions 152, 179, and 232 each coordinate Zn(2+). N278 contributes to the substrate binding site. D305 is a binding site for Zn(2+). Residue D305 is part of the active site. Residue H309 participates in substrate binding.

This sequence belongs to the metallo-dependent hydrolases superfamily. DHOase family. Class I DHOase subfamily. The cofactor is Zn(2+).

It carries out the reaction (S)-dihydroorotate + H2O = N-carbamoyl-L-aspartate + H(+). It functions in the pathway pyrimidine metabolism; UMP biosynthesis via de novo pathway; (S)-dihydroorotate from bicarbonate: step 3/3. Its function is as follows. Catalyzes the reversible cyclization of carbamoyl aspartate to dihydroorotate. The polypeptide is Dihydroorotase (Ruminiclostridium cellulolyticum (strain ATCC 35319 / DSM 5812 / JCM 6584 / H10) (Clostridium cellulolyticum)).